Here is a 111-residue protein sequence, read N- to C-terminus: MGQFTVVSLGLLAMFLSLSGAKGDNCPASWISRNGVCNKLFPDRKTWLEAEKRTWKWSDRTSANYFSWNQGEPNDVQDNENCVHLWAPSGYLKWNDEPCASLHPFICQYKL.

Positions 1–23 are cleaved as a signal peptide; that stretch reads MGQFTVVSLGLLAMFLSLSGAKG. A disulfide bridge connects residues cysteine 26 and cysteine 37. Residues 33-108 form the C-type lectin domain; it reads RNGVCNKLFP…CASLHPFICQ (76 aa). The Mannose-binding motif lies at 72-74; that stretch reads EPN. Residues glutamate 80, asparagine 95, and aspartate 96 each contribute to the Ca(2+) site. Cysteine 82 and cysteine 99 are joined by a disulfide.

The protein belongs to the true venom lectin family. Expressed by the venom gland.

Its subcellular location is the secreted. Mannose-binding lectin which recognizes specific carbohydrate structures and agglutinates a variety of animal cells by binding to cell-surface glycoproteins and glycolipids. May be a calcium-dependent lectin. In Pseudoferania polylepis (Macleay's water snake), this protein is C-type lectin lectoxin-Enh1.